The chain runs to 283 residues: PTS system mannose-specific EIID component (283 aa).

Methionine 1 bears the N-formylmethionine mark. Topologically, residues 1-14 (MVDTTQTTTEKKLT) are cytoplasmic. Residues 11-281 (KKLTQSDIRG…GIAGYACGLL (271 aa)) enclose the PTS EIID domain. An intramembrane segment occupies 15–52 (QSDIRGVFLRSNLFQGSWNFERMQALGFCFSMVPAIRR). The Cytoplasmic segment spans residues 53–59 (LYPENNE). An intramembrane segment occupies 60–92 (ARKQAIRRHLEFFNTQPFVAAPILGVTLALEEQ). Residues 93-100 (RANGAEID) lie on the Cytoplasmic side of the membrane. A membrane pass occupies residues 101 to 140 (DGAINGIKVGLMGPLAGVGDPIFWGTVRPVFAALGAGIAM). Topologically, residues 141-144 (SGSL) are periplasmic. A transmembrane helix spans residues 145–173 (LGPLLFFILFNLVRLATRYYGVAYGYSKG). The Cytoplasmic segment spans residues 174–183 (IDIVKDMGGG). A membrane pass occupies residues 184 to 209 (FLQKLTEGASILGLFVMGALVNKWTH). The Periplasmic portion of the chain corresponds to 210 to 241 (VNIPLVVSRITDQTGKEHVTTVQTILDQLMPG). The hydrophobic stretch at 242–255 (LVPLLLTFACMWLL) threads the membrane. Residues 256 to 261 (RKKVNP) are Cytoplasmic-facing. At 262 to 280 (LWIIVGFFVIGIAGYACGL) the chain is embedded in the membrane. At 281–283 (LGL) the chain is on the periplasmic side.

Homotrimer of protomers that are composed of two subunits, IIC and IID.

It is found in the cell inner membrane. In terms of biological role, the phosphoenolpyruvate-dependent sugar phosphotransferase system (sugar PTS), a major carbohydrate active transport system, catalyzes the phosphorylation of incoming sugar substrates concomitantly with their translocation across the cell membrane. The enzyme II ManXYZ PTS system is involved in mannose transport. This Escherichia coli O157:H7 protein is PTS system mannose-specific EIID component (manZ).